The sequence spans 1457 residues: ABC transporter G family member 36 (1457 aa).

The tract at residues 14–43 (RLGGSMRGDSGSMWRRGDDVFSRSSREEDD) is disordered. Positions 28–39 (RRGDDVFSRSSR) are enriched in basic and acidic residues. The region spanning 164 to 437 (GNALGILPNR…FESMGFKCPD (274 aa)) is the ABC transporter 1 domain. Residue 197 to 204 (GPPGSGKT) coordinates ATP. The 214-residue stretch at 515–728 (ELLKANIDRE…AQNAISVNEL (214 aa)) folds into the ABC transmembrane type-2 1 domain. Transmembrane regions (helical) follow at residues 533–553 (FVYM…MTLF), 565–585 (SGGI…FNGF), 621–641 (IPIT…VIGF), 653–673 (LLML…GGAA), 677–697 (IVAN…GGFI), 706–726 (WWIW…ISVN), and 765–785 (IGFG…TLAL). The tract at residues 821 to 841 (SSGSTRRPMGNGTENDSTIVD) is disordered. The ABC transporter 2 domain occupies 860–1112 (LSFDNVRYSV…ELIKYFESIP (253 aa)). 905–912 (GVSGAGKT) contributes to the ATP binding site. Residues 1185–1399 (TQCMACLWKQ…TLYGLVVSQF (215 aa)) form the ABC transmembrane type-2 2 domain. Helical transmembrane passes span 1209–1229 (FFFT…LGGK), 1244–1264 (YAAV…VVAV), 1292–1312 (IPYT…MIGF), 1319–1339 (FFWY…YGMM), 1349–1369 (IASI…GFVI), 1380–1400 (WYCW…SQFG), and 1429–1449 (WVAT…GFAI).

It belongs to the ABC transporter superfamily. ABCG family. PDR (TC 3.A.1.205) subfamily.

The protein localises to the membrane. In terms of biological role, may be a general defense protein. This is ABC transporter G family member 36 from Oryza sativa subsp. japonica (Rice).